The chain runs to 644 residues: Chaperone protein DnaK (644 aa).

Phosphothreonine; by autocatalysis is present on T199. The disordered stretch occupies residues 605 to 644; that stretch reads KKSSEGQAAQGQTQSQESTKPVEEGVVDAEFEEVKEEDKK. The segment covering 609-623 has biased composition (polar residues); the sequence is EGQAAQGQTQSQEST. Positions 629–644 are enriched in acidic residues; it reads GVVDAEFEEVKEEDKK.

It belongs to the heat shock protein 70 family.

Acts as a chaperone. The polypeptide is Chaperone protein DnaK (Legionella pneumophila (strain Paris)).